The primary structure comprises 960 residues: Mast/stem cell growth factor receptor Kit (960 aa).

The first 24 residues, 1–24, serve as a signal peptide directing secretion; that stretch reads MEGAHLAWELAHAVLLLSLIPAGG. Residues 25–511 lie on the Extracellular side of the membrane; the sequence is SVPHEESSLV…IRTHTLFTPL (487 aa). Ig-like C2-type domains lie at 27-102, 111-194, 201-294, 303-396, and 399-497; these read PHEE…VFVK, DSLI…LNVR, PVIT…LKAL, ATMN…VYVK, and PEIL…FNFA. 4 disulfide bridges follow: Cys45–Cys87, Cys126–Cys175, Cys141–Cys172, and Cys222–Cys276. N-linked (GlcNAc...) asparagine glycosylation is found at Asn76, Asn135, Asn149, Asn269, Asn286, Asn306, Asn318, Asn338, Asn343, Asn356, Asn453, and Asn469. A disulfide bridge connects residues Cys414 and Cys481. The helical transmembrane segment at 512-532 threads the bilayer; that stretch reads LIAFGVAAGLMCIIVMILVYI. Residues 533-960 lie on the Cytoplasmic side of the membrane; that stretch reads YLQKPKYEVQ…TQPLLVREDV (428 aa). Residue Tyr554 participates in Mg(2+) binding. 2 positions are modified to phosphotyrosine; by autocatalysis: Tyr554 and Tyr556. The Protein kinase domain maps to 575 to 913; it reads LSFGKTLGAG…QIVQLIEQQL (339 aa). Residues 582–589, Lys609, and 657–663 contribute to the ATP site; these read GAGAFGKV and EYCCYGD. Residues Tyr689 and Tyr706 each carry the phosphotyrosine; by autocatalysis modification. Asp777 (proton acceptor) is an active-site residue. Arg781 contributes to the ATP binding site. Mg(2+) is bound by residues Asn782 and Asp795. Phosphotyrosine; by autocatalysis is present on residues Tyr808 and Tyr921.

This sequence belongs to the protein kinase superfamily. Tyr protein kinase family. CSF-1/PDGF receptor subfamily. In terms of processing, ubiquitinated. KIT is rapidly ubiquitinated after autophosphorylation induced by KITLG/SCF binding, leading to internalization and degradation. Autophosphorylated on tyrosine residues. KITLG/SCF binding promotes autophosphorylation. Phosphorylated tyrosine residues are important for interaction with specific binding partners. High in the brain and testes and also present in the bursa of Fabricus, heart, kidney, lung, spleen thymus and ovary.

Its subcellular location is the cell membrane. The catalysed reaction is L-tyrosyl-[protein] + ATP = O-phospho-L-tyrosyl-[protein] + ADP + H(+). Tyrosine-protein kinase that acts as a cell-surface receptor for the cytokine KITLG/SCF and plays an essential role in the regulation of cell survival and proliferation, hematopoiesis, stem cell maintenance, gametogenesis, mast cell development, migration and function, and in melanogenesis. In response to KITLG/SCF binding, KIT can activate several signaling pathways. Promotes phosphorylation of PIK3R1, the regulatory subunit of phosphatidylinositol 3-kinase, and subsequent activation of the kinase AKT1. Activated KIT also transmits signals via GRB2 and activation of RAS, RAF1 and the MAP kinases MAPK1/ERK2 and/or MAPK3/ERK1. Promotes activation of STAT family members STAT1, STAT3, STAT5A and STAT5B. KIT promotes activation of PLCG1, leading to the production of the cellular signaling molecules diacylglycerol and inositol 1,4,5-trisphosphate. KIT signaling is modulated by protein phosphatases, and by rapid internalization and degradation of the receptor. This Gallus gallus (Chicken) protein is Mast/stem cell growth factor receptor Kit (KIT).